Here is a 77-residue protein sequence, read N- to C-terminus: Delta-conotoxin GmVIA (77 aa).

An N-terminal signal peptide occupies residues 1-22; that stretch reads MKLTCMMIVAVLFLTAWTFVTA. A propeptide spanning residues 23–48 is cleaved from the precursor; sequence DDSGNGMEILFPKAGHEMENLEVSNR. 3 disulfides stabilise this stretch: C52-C67, C59-C72, and C66-C76.

It belongs to the conotoxin O1 superfamily. Expressed by the venom duct.

Its subcellular location is the secreted. Delta-conotoxins bind to site 6 of voltage-gated sodium channels (Nav) and inhibit the inactivation process. This toxin shows weak activity on rNav1.2/SCN2A (EC(50)=2.5 uM) and rNav1.4/SCN4A (EC(50)=4.8 uM). In vivo, injection of this peptide in the head region of garden snail induces retraction of the head and body into shell. This is followed by secretion of viscous green slime and a convulsive undulation into and out of the shell. No apparent biological activity was observed when a much greater dose of peptide was injected intraperitoneally into mice. The sequence is that of Delta-conotoxin GmVIA from Conus gloriamaris (Glory-of-the-Sea cone).